The chain runs to 650 residues: Chaperone protein DnaK (650 aa).

Thr-200 carries the phosphothreonine; by autocatalysis modification.

It belongs to the heat shock protein 70 family.

Functionally, acts as a chaperone. The sequence is that of Chaperone protein DnaK from Paraburkholderia phytofirmans (strain DSM 17436 / LMG 22146 / PsJN) (Burkholderia phytofirmans).